Reading from the N-terminus, the 121-residue chain is Large ribosomal subunit protein bL12 (121 aa).

Belongs to the bacterial ribosomal protein bL12 family. Homodimer. Part of the ribosomal stalk of the 50S ribosomal subunit. Forms a multimeric L10(L12)X complex, where L10 forms an elongated spine to which 2 to 4 L12 dimers bind in a sequential fashion. Binds GTP-bound translation factors.

Its function is as follows. Forms part of the ribosomal stalk which helps the ribosome interact with GTP-bound translation factors. Is thus essential for accurate translation. The polypeptide is Large ribosomal subunit protein bL12 (Ureaplasma urealyticum serovar 10 (strain ATCC 33699 / Western)).